A 279-amino-acid polypeptide reads, in one-letter code: Probable endonuclease 4 (279 aa).

Residues H69, H109, E145, D179, H182, H216, D229, H231, and E261 each coordinate Zn(2+).

This sequence belongs to the AP endonuclease 2 family. The cofactor is Zn(2+).

The enzyme catalyses Endonucleolytic cleavage to 5'-phosphooligonucleotide end-products.. In terms of biological role, endonuclease IV plays a role in DNA repair. It cleaves phosphodiester bonds at apurinic or apyrimidinic (AP) sites, generating a 3'-hydroxyl group and a 5'-terminal sugar phosphate. The chain is Probable endonuclease 4 from Chlorobium luteolum (strain DSM 273 / BCRC 81028 / 2530) (Pelodictyon luteolum).